Here is a 248-residue protein sequence, read N- to C-terminus: MSVCLLCEEGADPGALSILAQRWQLTSDDEALMALVLTPERLELRKRDEPKLGAIYVDFVSGTMAHRRKFGGGRGEAVAKAVGIKGNYRPDVVDATAGLGRDAFVLASLGCRVRMLERNPVVAALLDDGLQRGYQDAEIGPWLRERMTLLHASSLTALGDIDPRPEVVYLDPMYPHKQKSALVKKEMRVFQSLVGSDDDADGLLEPARRLATKRVVVKRPDYAPPLANVQAHAASTTKSHRFDIYMPV.

S-adenosyl-L-methionine is bound by residues 101–102 (RD), 117–118 (ER), 153–154 (SS), and Asp171.

This sequence belongs to the methyltransferase superfamily. RsmJ family.

The protein localises to the cytoplasm. The catalysed reaction is guanosine(1516) in 16S rRNA + S-adenosyl-L-methionine = N(2)-methylguanosine(1516) in 16S rRNA + S-adenosyl-L-homocysteine + H(+). Functionally, specifically methylates the guanosine in position 1516 of 16S rRNA. This is Ribosomal RNA small subunit methyltransferase J from Serratia proteamaculans (strain 568).